A 489-amino-acid polypeptide reads, in one-letter code: GTPase Der (489 aa).

EngA-type G domains follow at residues 30–199 (PVVS…KDKP) and 227–403 (FRLA…SRSH). Residues 36–43 (GRQNVGKS), 85–89 (DTPGL), 151–154 (NKAD), 233–240 (GKPNSGKS), 280–284 (DTAGI), and 345–348 (NKWD) each bind GTP. One can recognise a KH-like domain in the interval 404 to 488 (RKVSTSELNK…PIRLEFRSDR (85 aa)).

It belongs to the TRAFAC class TrmE-Era-EngA-EngB-Septin-like GTPase superfamily. EngA (Der) GTPase family. In terms of assembly, associates with the 50S ribosomal subunit.

Its function is as follows. GTPase that plays an essential role in the late steps of ribosome biogenesis. In Leptospira interrogans serogroup Icterohaemorrhagiae serovar copenhageni (strain Fiocruz L1-130), this protein is GTPase Der.